Here is a 1213-residue protein sequence, read N- to C-terminus: Protein jagged-1b (1213 aa).

Positions 1–26 (MILRRSSVFSAFYLHAFLLCLRTTVS) are cleaved as a signal peptide. Residues 27 to 1064 (DASGHFELEI…HQIPSPKTDY (1038 aa)) lie on the Extracellular side of the membrane. N139 is a glycosylation site (N-linked (GlcNAc...) asparagine). Residues 182-226 (VTCLEHYYGFGCNKFCRPRDEFFGHYTCDQNGNKTCLEGWTGPDC) form the DSL domain. 2 disulfide bridges follow: C184/C193 and C197/C209. A glycan (N-linked (GlcNAc...) asparagine) is linked at N214. 39 disulfide bridges follow: C217–C226, C231–C242, C235–C248, C250–C259, C262–C273, C268–C279, C281–C290, C297–C309, C303–C319, C321–C330, C337–C348, C342–C357, C359–C368, C375–C386, C380–C395, C397–C406, C413–C424, C418–C433, C435–C444, C451–C461, C455–C470, C472–C481, C488–C499, C493–C508, C510–C519, C526–C537, C531–C546, C548–C557, C596–C612, C614–C623, C630–C641, C635–C650, C652–C661, C668–C679, C673–C688, C690–C699, C706–C717, C711–C726, and C728–C737. In terms of domain architecture, EGF-like 1 spans 227 to 260 (NTAICRQGCSTEHGSCKQPGGCKCLYGWQGPYCD). In terms of domain architecture, EGF-like 2; atypical spans 261-291 (KCIPHPGCVHGTCVEPWQCLCDTNWGGQLCD). EGF-like domains are found at residues 293 to 331 (DLNYCGTHQPCLNGGTCSNTGPDKYQCSCEDGYSGVNCE) and 333 to 369 (AEHACLSNPCANGGTCKETSQGYECHCAIGWSGTSCE). The EGF-like 5; calcium-binding domain maps to 371 to 407 (NVDDCTPNQCKHGGTCQDLVNGFKCACPPHWTGKTCQ). The 37-residue stretch at 409 to 445 (DANECEDKPCVNAKSCHNLIGAYFCECLPGWSGQNCD) folds into the EGF-like 6; calcium-binding domain. The EGF-like 7; calcium-binding domain occupies 447 to 482 (NINDCKGQCLNGGTCKDLVNGYRCLCPPGYTGEQCE). In terms of domain architecture, EGF-like 8; calcium-binding spans 484-520 (DVDECASSPCLNGGRCQDEVNGFQCLCPAGFSGQLCQ). EGF-like domains lie at 522–558 (DIDYCKPNPCQNGAQCFNLASDYFCKCPDDYEGKNCS) and 592–624 (SSNVCGPHGRCRSQAGGQFTCECQEGFRGTYCH). N556 carries an N-linked (GlcNAc...) asparagine glycan. The region spanning 626-662 (NINDCESNPCRNGGTCIDKVNVYQCICADGWEGVHCE) is the EGF-like 11; calcium-binding domain. The region spanning 664–700 (NIDDCSLNPCLNKGACQDLVNDFYCECRNGWKGKTCH) is the EGF-like 12; calcium-binding domain. The EGF-like 13 domain occupies 702–738 (RDSQCDEATCNNGGTCHDEGDTFKCRCSPGWEGATCN). N-linked (GlcNAc...) asparagine glycosylation occurs at N742. 9 cysteine pairs are disulfide-bonded: C745-C756, C750-C765, C767-C776, C783-C794, C788-C803, C805-C814, C821-C832, C826-C841, and C843-C852. The region spanning 746–777 (LPNPCENGGTCVVNGDSFNCVCKEGWEGSTCT) is the EGF-like 14 domain. Positions 779-815 (NTNDCNPHPCYNSGTCVDGENWYRCECAPGFAGPDCR) constitute an EGF-like 15; calcium-binding domain. One can recognise an EGF-like 16; calcium-binding domain in the interval 817-853 (NINECQSSPCAFGSTCVDEINGYRCLCPPGRIGPDCQ). In terms of domain architecture, VWFC spans 860–914 (CIANGQVTADGAKWEEDCNICQCQNGRIHCTMMWCGPKSCRIGKARGGCPASQSC). Residues 918-956 (KEEQCFVKPCPSLGECWPSAPPPPSKCHASFSYQDDSCA) form the EGF-like 17 domain. N-linked (GlcNAc...) asparagine glycosylation is found at N957, N988, and N1042. A helical membrane pass occupies residues 1065-1087 (LVPLLSSIFIVLWIFALASAFLW). Over 1088 to 1213 (CIHRRRKQNT…QSLNRMEYIV (126 aa)) the chain is Cytoplasmic. The interval 1181-1202 (EERAPNKNPNWTNKQDNRDLET) is disordered.

Its subcellular location is the membrane. The protein localises to the cell membrane. Its function is as follows. Ligand for Notch receptors and involved in the mediation of Notch signaling. Seems to be involved in cell-fate decisions. The sequence is that of Protein jagged-1b (jag1b) from Danio rerio (Zebrafish).